A 176-amino-acid chain; its full sequence is Alkyl hydroperoxide reductase AhpD (176 aa).

Cys-131 serves as the catalytic Proton donor. Cys-131 and Cys-134 are oxidised to a cystine. The active-site Cysteine sulfenic acid (-SOH) intermediate is Cys-134.

Belongs to the AhpD family.

The enzyme catalyses N(6)-[(R)-dihydrolipoyl]-L-lysyl-[lipoyl-carrier protein] + a hydroperoxide = N(6)-[(R)-lipoyl]-L-lysyl-[lipoyl-carrier protein] + an alcohol + H2O. In terms of biological role, antioxidant protein with alkyl hydroperoxidase activity. Required for the reduction of the AhpC active site cysteine residues and for the regeneration of the AhpC enzyme activity. This Methylobacterium sp. (strain 4-46) protein is Alkyl hydroperoxide reductase AhpD.